The primary structure comprises 199 residues: Recombination protein RecR (199 aa).

The C4-type zinc-finger motif lies at 59–74 (CLNCGNVGTSDICALC). The 95-residue stretch at 82 to 176 (GELCVVEDVA…KLTSLAQGVP (95 aa)) folds into the Toprim domain.

The protein belongs to the RecR family.

Functionally, may play a role in DNA repair. It seems to be involved in an RecBC-independent recombinational process of DNA repair. It may act with RecF and RecO. This chain is Recombination protein RecR, found in Ruegeria sp. (strain TM1040) (Silicibacter sp.).